The sequence spans 396 residues: 1-deoxy-D-xylulose 5-phosphate reductoisomerase (396 aa).

NADPH-binding residues include Thr13, Gly14, Ser15, Ile16, and Asn127. Lys128 serves as a coordination point for 1-deoxy-D-xylulose 5-phosphate. Glu129 provides a ligand contact to NADPH. Residue Asp153 participates in Mn(2+) binding. 4 residues coordinate 1-deoxy-D-xylulose 5-phosphate: Ser154, Glu155, Ser184, and His207. Glu155 lines the Mn(2+) pocket. Gly213 lines the NADPH pocket. Residues Ser220, Asn225, Lys226, and Glu229 each coordinate 1-deoxy-D-xylulose 5-phosphate. Mn(2+) is bound at residue Glu229.

It belongs to the DXR family. The cofactor is Mg(2+). Mn(2+) is required as a cofactor.

It catalyses the reaction 2-C-methyl-D-erythritol 4-phosphate + NADP(+) = 1-deoxy-D-xylulose 5-phosphate + NADPH + H(+). Its pathway is isoprenoid biosynthesis; isopentenyl diphosphate biosynthesis via DXP pathway; isopentenyl diphosphate from 1-deoxy-D-xylulose 5-phosphate: step 1/6. Its function is as follows. Catalyzes the NADPH-dependent rearrangement and reduction of 1-deoxy-D-xylulose-5-phosphate (DXP) to 2-C-methyl-D-erythritol 4-phosphate (MEP). This Pseudomonas syringae pv. tomato (strain ATCC BAA-871 / DC3000) protein is 1-deoxy-D-xylulose 5-phosphate reductoisomerase.